The sequence spans 140 residues: Protein E6 (140 aa).

Zinc fingers lie at residues 28–64 (CNFCKRFLSYTELTDFDTKCLSLIWKDDFVFACCRYC) and 101–137 (CHHCLKLLNQIEKLDICGRSELFHKVRRGWKGLCRQC).

It belongs to the papillomaviridae E6 protein family. In terms of assembly, forms homodimers. Interacts with ubiquitin-protein ligase UBE3A/E6-AP; this interaction stimulates UBE3A ubiquitin activity. Interacts with host BAK1.

Its subcellular location is the host cytoplasm. The protein resides in the host nucleus. Functionally, plays a major role in the induction and maintenance of cellular transformation. E6 associates with host UBE3A/E6-AP ubiquitin-protein ligase and modulates its activity. Protects host keratinocytes from apoptosis by mediating the degradation of host BAK1. May also inhibit host immune response. This chain is Protein E6, found in Human papillomavirus 24.